The chain runs to 226 residues: uncharacterized protein (226 aa).

This is an uncharacterized protein from Mycobacterium bovis (strain ATCC BAA-935 / AF2122/97).